A 172-amino-acid polypeptide reads, in one-letter code: Fimbrial-like protein FimF (172 aa).

An N-terminal signal peptide occupies residues 1-21; that stretch reads MILRRVFIAIGCVLFSPLSQA. Cysteines 41 and 81 form a disulfide.

It belongs to the fimbrial protein family.

The protein resides in the fimbrium. The sequence is that of Fimbrial-like protein FimF (fimF) from Salmonella typhimurium (strain LT2 / SGSC1412 / ATCC 700720).